Consider the following 394-residue polypeptide: Salivary plasminogen activator gamma (394 aa).

An N-terminal signal peptide occupies residues 1–36 (MVNTMKTKLLCVLLLCGAVFSLPRQETYRQLARGSR). A Kringle domain is found at 45 to 126 (CYKDQGVTYR…TSESCSVPVC (82 aa)). Intrachain disulfides connect C45–C126, C66–C108, C97–C121, C131–C262, C174–C190, C182–C251, C276–C351, C308–C324, and C341–C369. In terms of domain architecture, Peptidase S1 spans 143 to 393 (STGGLFTDIT…YLGWIRDNMR (251 aa)). Residues H189 and D238 each act as charge relay system in the active site. N315 carries N-linked (GlcNAc...) asparagine glycosylation. S345 serves as the catalytic Charge relay system.

It belongs to the peptidase S1 family. In terms of assembly, monomer.

The protein resides in the secreted. It carries out the reaction Specific cleavage of Arg-|-Val bond in plasminogen to form plasmin.. In terms of biological role, probably essential to support the feeding habits of this exclusively haematophagous animal. Probable potent thrombolytic agent. This is Salivary plasminogen activator gamma from Desmodus rotundus (Vampire bat).